The chain runs to 697 residues: Protein FAM13A (697 aa).

Disordered stretches follow at residues 1–21, 52–112, and 133–229; these read MACEIMPLQSSQEDERPMSPF, HLFD…GFSN, and YIGE…QQES. Serine 19 carries the post-translational modification Phosphoserine. Residues 58-78 show a composition bias toward low complexity; sequence SSGGQSSEDSESGASSSSSTS. The segment covering 86 to 103 has biased composition (basic and acidic residues); sequence AKEQDESRHSRDVGRLNK. Polar residues predominate over residues 146 to 169; that stretch reads SSRLSELNENQDGLVNMENLNPTP. Over residues 170-197 the composition is skewed to basic and acidic residues; the sequence is SHERTGSDHVELISDGSKENEKDGRQSQ. Serine 271 and serine 291 each carry phosphoserine. 2 disordered regions span residues 307-338 and 398-433; these read TEMPPSPPNSHPFMRRRSSSLGSYEDEQEDLT and LKISEEDLPPRMRQRSNTLPKSFGSQLEKEDEKKQE. Positions 398–407 are enriched in basic and acidic residues; it reads LKISEEDLPP. Serine 401 is modified (phosphoserine). Polar residues predominate over residues 412-422; that stretch reads RSNTLPKSFGS. The span at 424–433 shows a compositional bias: basic and acidic residues; sequence LEKEDEKKQE.

The protein belongs to the FAM13 family.

In Bos taurus (Bovine), this protein is Protein FAM13A (FAM13A).